A 138-amino-acid polypeptide reads, in one-letter code: Small ribosomal subunit protein uS11c (138 aa).

The tract at residues M1–Q21 is disordered. Positions G9–Q21 are enriched in basic residues.

This sequence belongs to the universal ribosomal protein uS11 family. Part of the 30S ribosomal subunit.

It localises to the plastid. The protein resides in the chloroplast. This Cicer arietinum (Chickpea) protein is Small ribosomal subunit protein uS11c.